A 956-amino-acid chain; its full sequence is Calsyntenin-3 (956 aa).

An N-terminal signal peptide occupies residues 1–20 (MARMSFLSFLLFCLTSVAHG). The Extracellular portion of the chain corresponds to 21 to 850 (NKANKHKPWI…PHRNSVVPGA (830 aa)). 2 consecutive Cadherin domains span residues 30 to 151 (IETE…SPVF) and 152 to 271 (VERR…IPLF). N-linked (GlcNAc...) asparagine glycosylation is found at Asn333, Asn353, Asn513, and Asn743. The helical transmembrane segment at 851–871 (ATVIIMVCVGFLVVMVILGVF) threads the bilayer. Over 872 to 956 (RIRSIHRRGE…EGRDSAPRRY (85 aa)) the chain is Cytoplasmic. Acidic residues predominate over residues 921-937 (GECEDEEEVVDSPDDTS). The segment at 921 to 956 (GECEDEEEVVDSPDDTSDDQRIIIKKEGRDSAPRRY) is disordered. The span at 938-956 (DDQRIIIKKEGRDSAPRRY) shows a compositional bias: basic and acidic residues.

The protein belongs to the calsyntenin family. As to quaternary structure, homooligomer and heterooligomer; mediates both homophilic and heterophilc interactions with clstn1 and clstn2 paralogs via cadherin domains. Interacts (via cadherin domains) with both alpha and beta isoforms of neurexins. In terms of tissue distribution, by 48 hours post-fertilization (hpf), widely expressed in the brain, with strong expression in the telencephalon and the midbrain. Not expressed in the optic tectum.

Its subcellular location is the postsynaptic cell membrane. It is found in the endoplasmic reticulum membrane. The protein resides in the golgi apparatus membrane. Its function is as follows. Synaptic adhesion molecule. Promotes synapse development by acting as a cell adhesion molecule at the postsynaptic membrane, which associates with presynaptic neurexins. This chain is Calsyntenin-3, found in Danio rerio (Zebrafish).